The following is a 378-amino-acid chain: MQTPKLIRPTLLSMAILSSMAWATGASAALVPPKGYDAPIEKMKTGDHNFSCEAIPKPYTDKLVFRSKYEGSDKARATLNAVSEEAFRDATKDITTLERGVSKVVMQYMRDGRPEQLDCALNMMTTWAKADALESREFNHTGKSMRKWALGSMSSAYLRLKFSESHPLANRQQDAKIIETWFSKLADQVVSDWSNLPLEKINNHSYWAAWSVMATAVATNRQDLFDWAVKEYKVAANQVDKDGFLPNEMKRRQRALSYHNYALPPLAMIASFAQANGVDLRPENNGALKRLGDRVLAGVKDPSIFAEHNGEKQDMTDLKKDPKFAWLEPYCSLYTCSPDVLEEKHEKQPFKTFRLGGDLTKVYDPTHEKGDKGDNDGS.

An N-terminal signal peptide occupies residues 1-28 (MQTPKLIRPTLLSMAILSSMAWATGASA). Residues 67–68 (SK), 140–141 (HT), and Y258 each bind substrate.

Belongs to the polysaccharide lyase 5 family.

It is found in the periplasm. The enzyme catalyses Eliminative cleavage of alginate to give oligosaccharides with 4-deoxy-alpha-L-erythro-hex-4-enuronosyl groups at their non-reducing ends and beta-D-mannuronate at their reducing end.. With respect to regulation, the monovalent cation sodium enhances activity but is not absolutely required. In terms of biological role, catalyzes the depolymerization of alginate by cleaving the beta-1,4 glycosidic bond between two adjacent sugar residues via a beta-elimination mechanism. Degrades deacetylated polymannuronate (polyM) alginate from P.aeruginosa more efficiently than non-deacetylated polyM and alginate from M.pyrifera. AlgL from P.syringae also degrades its own alginate, which may indicate a role in cleaving preformed alginate and/or in determining the length of the alginate polymer. May serve to degrade mislocalized alginate that is trapped in the periplasmic space. The chain is Alginate lyase from Pseudomonas syringae pv. syringae.